The following is a 146-amino-acid chain: Large ribosomal subunit protein uL15 (146 aa).

Over residues 1-18 the composition is skewed to basic and acidic residues; it reads MKLHELKPSEGSRKERNR. The tract at residues 1–50 is disordered; that stretch reads MKLHELKPSEGSRKERNRVGRGTGSGNGKTSGRGHKGQKARSGGGVRLGF. Positions 21 to 31 are enriched in gly residues; it reads RGTGSGNGKTS.

It belongs to the universal ribosomal protein uL15 family. As to quaternary structure, part of the 50S ribosomal subunit.

In terms of biological role, binds to the 23S rRNA. The polypeptide is Large ribosomal subunit protein uL15 (Listeria monocytogenes serotype 4b (strain CLIP80459)).